The sequence spans 329 residues: uncharacterized protein (329 aa).

One can recognise a Nudix hydrolase domain in the interval 27 to 185 (PRRASVAVII…IQIDSSRALK (159 aa)). A run of 3 helical transmembrane segments spans residues 123–143 (VITS…VFIL), 227–247 (PFLR…LSPS), and 303–323 (LTLL…FLII).

The protein localises to the membrane. This is an uncharacterized protein from Schizosaccharomyces pombe (strain 972 / ATCC 24843) (Fission yeast).